The following is a 412-amino-acid chain: DnaJ homolog subfamily A member 2 (412 aa).

Positions 8 to 70 constitute a J domain; that stretch reads KLYDILGVPP…EKRELYDRYG (63 aa). N6-acetyllysine is present on Lys39. Phosphoserine occurs at positions 78 and 123. A CR-type zinc finger spans residues 130–214; sequence GKTTKLQLSK…CEGKKVIKEV (85 aa). A Glycyl lysine isopeptide (Lys-Gly) (interchain with G-Cter in SUMO2) cross-link involves residue Lys134. Zn(2+) contacts are provided by Cys143 and Cys146. The stretch at 143–150 is one CXXCXGXG motif repeat; that stretch reads CSACSGQG. Lys152 carries the N6-acetyllysine modification. Zn(2+) is bound by residues Cys159, Cys162, Cys186, Cys189, Cys202, and Cys205. CXXCXGXG motif repeat units follow at residues 159–166, 186–193, and 202–209; these read CSACRGRG, CSDCNGEG, and CKKCEGKK. The tract at residues 365–412 is disordered; sequence IGETEEVELQEFDSTRGSGGGQRREAYNDSSDEESSSHHGPGVQCAHQ. Position 391 is a phosphotyrosine (Tyr391). Phosphoserine is present on residues Ser394 and Ser395. The residue at position 409 (Cys409) is a Cysteine methyl ester. A lipid anchor (S-farnesyl cysteine) is attached at Cys409. A propeptide spans 410–412 (removed in mature form); it reads AHQ.

The protein resides in the membrane. In terms of biological role, co-chaperone of Hsc70. Stimulates ATP hydrolysis and the folding of unfolded proteins mediated by HSPA1A/B (in vitro). This chain is DnaJ homolog subfamily A member 2 (Dnaja2), found in Rattus norvegicus (Rat).